We begin with the raw amino-acid sequence, 221 residues long: Endonuclease V (221 aa).

Mg(2+)-binding residues include aspartate 43 and aspartate 109.

It belongs to the endonuclease V family. It depends on Mg(2+) as a cofactor.

Its subcellular location is the cytoplasm. The enzyme catalyses Endonucleolytic cleavage at apurinic or apyrimidinic sites to products with a 5'-phosphate.. Its function is as follows. DNA repair enzyme involved in the repair of deaminated bases. Selectively cleaves double-stranded DNA at the second phosphodiester bond 3' to a deoxyinosine leaving behind the intact lesion on the nicked DNA. The sequence is that of Endonuclease V from Petrotoga mobilis (strain DSM 10674 / SJ95).